The primary structure comprises 51 residues: MPSQKSFRTKQKLAKAQKQNRPLPQWIRLRSGNTIRYNAKRRHWRRTKLNI.

Positions 1-22 are disordered; sequence MPSQKSFRTKQKLAKAQKQNRP.

This sequence belongs to the eukaryotic ribosomal protein eL39 family. In terms of assembly, interacts with YIH1.

The protein is Large ribosomal subunit protein eL39 (RPL39) of Debaryomyces hansenii (strain ATCC 36239 / CBS 767 / BCRC 21394 / JCM 1990 / NBRC 0083 / IGC 2968) (Yeast).